We begin with the raw amino-acid sequence, 1704 residues long: Phospholipid-transporting ATPase ABCA3 (1704 aa).

Residue N14 is glycosylated (N-linked (GlcNAc...) asparagine). A helical transmembrane segment spans residues 22-42 (VLVTVLELFLPLLFSGILIWL). 4 N-linked (GlcNAc...) asparagine glycosylation sites follow: N53, N124, N140, and N228. 5 helical membrane passes run 251–271 (ISDP…MLSF), 307–327 (AWFL…TLLF), 344–364 (SLVL…SFMV), 373–393 (MAAT…FFVA), and 405–425 (LLSC…IGKF). The region spanning 530 to 763 (IKIKHLSKVF…YGAGYHMTLV (234 aa)) is the ABC transporter 1 domain. 566-573 (GHNGAGKT) serves as a coordination point for ATP. Residues N620 and N945 are each glycosylated (N-linked (GlcNAc...) asparagine). 6 consecutive transmembrane segments (helical) span residues 1100–1120 (IALN…ILAV), 1144–1164 (SALL…LVVF), 1183–1203 (LLLM…SFFF), 1213–1233 (LTIF…IMRI), 1245–1265 (LDHV…SNFY), and 1310–1330 (MAAS…NLLW). N-linked (GlcNAc...) asparagine glycosylation is present at N1350. In terms of domain architecture, ABC transporter 2 spans 1381 to 1614 (LIINELSKVY…FGSGYSLQAK (234 aa)). 1416–1423 (GFNGAGKT) is an ATP binding site.

As to quaternary structure, homooligomer; disulfide-linked. N-glycosylated. Localization at intracellular vesicles is accompanied by processing of oligosaccharide from high mannose type to complex type. N-linked glycosylation at Asn-124 and Asn-140 is required for stability and efficient anterograde trafficking and prevents from proteasomal degradation. Post-translationally, proteolytically cleaved by CTSL and to a lower extent by CTSB within multivesicular bodies (MVB) and lamellar bodies (LB) leading to a mature form of 150 kDa. In terms of tissue distribution, highly expressed in lung, moderately expressed in stomach, intestine, and kidney and weakly expressed in thyroid, brain, liver, spleen, heart, testis, and thymus.

It localises to the endosome. The protein resides in the multivesicular body membrane. Its subcellular location is the cytoplasmic vesicle membrane. It is found in the late endosome membrane. The protein localises to the lysosome membrane. The enzyme catalyses ATP + H2O + xenobioticSide 1 = ADP + phosphate + xenobioticSide 2.. It catalyses the reaction a 1,2-diacyl-sn-glycero-3-phosphocholine(in) + ATP + H2O = a 1,2-diacyl-sn-glycero-3-phosphocholine(out) + ADP + phosphate + H(+). It carries out the reaction ATP + H2O + phospholipidSide 1 = ADP + phosphate + phospholipidSide 2.. The catalysed reaction is 1,2-dihexadecanoyl-sn-glycero-3-phosphocholine(in) + ATP + H2O = 1,2-dihexadecanoyl-sn-glycero-3-phosphocholine(out) + ADP + phosphate + H(+). The enzyme catalyses cholesterol(in) + ATP + H2O = cholesterol(out) + ADP + phosphate + H(+). It catalyses the reaction a 1,2-diacyl-sn-glycero-3-phospho-(1'-sn-glycerol)(in) + ATP + H2O = a 1,2-diacyl-sn-glycero-3-phospho-(1'-sn-glycerol)(out) + ADP + phosphate + H(+). Catalyzes the ATP-dependent transport of phospholipids such as phosphatidylcholine and phosphoglycerol from the cytoplasm into the lumen side of lamellar bodies, in turn participates in the lamellar bodies biogenesis and homeostasis of pulmonary surfactant. Transports preferentially phosphatidylcholine containing short acyl chains. In addition plays a role as an efflux transporter of miltefosine across macrophage membranes and free cholesterol (FC) through intralumenal vesicles by removing FC from the cell as a component of surfactant and protects cells from free cholesterol toxicity. The chain is Phospholipid-transporting ATPase ABCA3 from Rattus norvegicus (Rat).